The following is a 314-amino-acid chain: MSRPRRRGRDVHGVLLLDKPQGASSNDVLQKVKRIYNANRAGHTGALDPLATGMLPVCLGEATKFSQYLLDSDKRYRVIAKLGQRTDTSDADGQVVEERPVTFSAEQLDAALESFRGETQQVPSMYSALKYQGKKLYEYARQGIDVPREARPITVYELLFIRHEGDELELEVHCSKGTYIRTIIDDLGEKLGCGAHVIYLRRLAVSKYPVDRMVTLEQLRELVEQAETQGISPADLLDPLLMPMDSPASDFPVVNLPLTSSVYFKNGNPVRTTETPQRGLVRVTEGEENKFIGMGEIDDEGRVAPRRLVVEYPL.

Substrate is bound at residue H43. The Nucleophile role is filled by D48. Substrate is bound by residues Y76, Y179, and L200.

The protein belongs to the pseudouridine synthase TruB family. Type 1 subfamily.

The catalysed reaction is uridine(55) in tRNA = pseudouridine(55) in tRNA. Functionally, responsible for synthesis of pseudouridine from uracil-55 in the psi GC loop of transfer RNAs. The sequence is that of tRNA pseudouridine synthase B from Enterobacter sp. (strain 638).